The following is a 238-amino-acid chain: Uridylate kinase (238 aa).

12–15 (KLSG) contacts ATP. UMP is bound at residue Gly54. Residues Gly55 and Arg59 each contribute to the ATP site. UMP-binding positions include Asp74 and 135–142 (TGNPFFTT). Residues Thr162, Tyr168, and Asp171 each contribute to the ATP site.

It belongs to the UMP kinase family. As to quaternary structure, homohexamer.

It is found in the cytoplasm. The catalysed reaction is UMP + ATP = UDP + ADP. The protein operates within pyrimidine metabolism; CTP biosynthesis via de novo pathway; UDP from UMP (UMPK route): step 1/1. With respect to regulation, inhibited by UTP. Its function is as follows. Catalyzes the reversible phosphorylation of UMP to UDP. In Nitrosospira multiformis (strain ATCC 25196 / NCIMB 11849 / C 71), this protein is Uridylate kinase.